The primary structure comprises 467 residues: Sialic acid-binding Ig-like lectin 7 (467 aa).

The signal sequence occupies residues 1–18 (MLLLLLLPLLWGRERVEG). At 19 to 353 (QKSNRKDYSL…KMRPVSGVLL (335 aa)) the chain is on the extracellular side. Residues 39–122 (GMCVHVRCSF…ARMSDAGRYF (84 aa)) enclose the Ig-like V-type domain. An intrachain disulfide couples Cys-46 to Cys-106. Asn-105 is a glycosylation site (N-linked (GlcNAc...) asparagine). N-acetylneuraminate contacts are provided by residues Arg-124 and 131–135 (KWNYK). Residues Asn-142 and Asn-165 are each glycosylated (N-linked (GlcNAc...) asparagine). An Ig-like C2-type 1 domain is found at 150 to 233 (PNILIPGTLE…AGVTTNRTIQ (84 aa)). Cys-168 and Cys-217 form a disulfide bridge. Asn-229, Asn-235, Asn-242, and Asn-260 each carry an N-linked (GlcNAc...) asparagine glycan. The 97-residue stretch at 240 to 336 (PQNLTVTVFQ…GSQHVSLNLS (97 aa)) folds into the Ig-like C2-type 2 domain. The cysteines at positions 276 and 320 are disulfide-linked. N-linked (GlcNAc...) asparagine glycosylation occurs at Asn-334. The helical transmembrane segment at 354–376 (GAVGGAGATALVFLSFCVIFIVV) threads the bilayer. Over 377–467 (RSCRKKSARP…NEYSEIKIPK (91 aa)) the chain is Cytoplasmic. Polar residues predominate over residues 401–412 (IRGSASQGNLTE). Residues 401-431 (IRGSASQGNLTESWADDNPRHHGLAAHSSGE) form a disordered region. The residue at position 429 (Ser-429) is a Phosphoserine. Positions 435 to 440 (IQYAPL) match the ITIM motif motif. Residues 443–467 (HKGEPQDLSGQEATNNEYSEIKIPK) form a disordered region. Over residues 450–460 (LSGQEATNNEY) the composition is skewed to polar residues.

It belongs to the immunoglobulin superfamily. SIGLEC (sialic acid binding Ig-like lectin) family. As to quaternary structure, interacts with PTPN6/SHP-1 upon phosphorylation. Post-translationally, tyrosine phosphorylated. In terms of tissue distribution, predominantly expressed by resting and activated natural killer cells and at lower levels by granulocytes and monocytes. High expression found in placenta, liver, lung, spleen, and peripheral blood leukocytes.

Its subcellular location is the membrane. In terms of biological role, putative adhesion molecule that mediates sialic-acid dependent binding to cells. Preferentially binds to alpha-2,3- and alpha-2,6-linked sialic acid. Also binds disialogangliosides (disialogalactosyl globoside, disialyl lactotetraosylceramide and disialyl GalNAc lactotetraoslylceramide). The sialic acid recognition site may be masked by cis interactions with sialic acids on the same cell surface. In the immune response, may act as an inhibitory receptor upon ligand induced tyrosine phosphorylation by recruiting cytoplasmic phosphatase(s) via their SH2 domain(s) that block signal transduction through dephosphorylation of signaling molecules. Mediates inhibition of natural killer cells cytotoxicity. May play a role in hemopoiesis. Inhibits differentiation of CD34+ cell precursors towards myelomonocytic cell lineage and proliferation of leukemic myeloid cells (in vitro). The chain is Sialic acid-binding Ig-like lectin 7 (SIGLEC7) from Homo sapiens (Human).